A 1242-amino-acid chain; its full sequence is DNA excision repair protein ERCC-6-like (1242 aa).

Phosphoserine is present on Ser-14. The TPR 1 repeat unit spans residues 21–54 (YLRYVKEAKEATKNGDLEQALKLFNLAKDIFPNE). The Helicase ATP-binding domain occupies 109–277 (SLYRDGRRGG…WSLFDFACQG (169 aa)). 122-129 (DDMGLGKT) contributes to the ATP binding site. A DEAH box motif is present at residues 228–231 (DEAH). In terms of domain architecture, Helicase C-terminal spans 466–626 (FLMDLLKKLR…PFRYFSKQEL (161 aa)). Phosphoserine occurs at positions 755 and 773. Thr-815 bears the Phosphothreonine mark. 4 positions are modified to phosphoserine: Ser-963, Ser-989, Ser-998, and Ser-1021. A Phosphothreonine modification is found at Thr-1055. A phosphoserine mark is found at Ser-1061, Ser-1090, and Ser-1110. Residues 1103–1181 (EERLDNSSEA…LSDGQLVDSP (79 aa)) are disordered. Basic and acidic residues-rich tracts occupy residues 1105–1121 (RLDN…HLEE) and 1130–1140 (APEHTKEDPSR). A compositionally biased stretch (polar residues) spans 1141 to 1156 (ETLSSENKSSQLSTSK). Residues Ser-1173 and Ser-1180 each carry the phosphoserine modification. Residues 1192-1225 (YDTLVLHGKELKECGKIQEALDCLVKALDIKSSD) form a TPR 2 repeat.

This sequence belongs to the SNF2/RAD54 helicase family. In terms of assembly, interacts with PLK1, which phosphorylates it. Both proteins are mutually dependent on each other for correct subcellular localization. Interacts (via N-terminal TPR repeat) with BEND3 (via BEN domains 1 and 3); the interaction is direct. Post-translationally, phosphorylation by PLK1 prevents the association with chromosome arms and restricts its localization to the kinetochore-centromere region.

It localises to the chromosome. Its subcellular location is the centromere. The protein resides in the kinetochore. It carries out the reaction ATP + H2O = ADP + phosphate + H(+). Its function is as follows. DNA helicase that acts as a tension sensor that associates with catenated DNA which is stretched under tension until it is resolved during anaphase. Functions as ATP-dependent DNA translocase. Can promote Holliday junction branch migration (in vitro). This Bos taurus (Bovine) protein is DNA excision repair protein ERCC-6-like (ERCC6L).